Consider the following 406-residue polypeptide: 5-methylthioadenosine/S-adenosylhomocysteine deaminase (406 aa).

Zn(2+) is bound by residues histidine 55 and histidine 57. The substrate site is built by glutamate 84, arginine 136, arginine 148, and histidine 173. Histidine 200 contacts Zn(2+). Glutamate 203 and aspartate 279 together coordinate substrate. A Zn(2+)-binding site is contributed by aspartate 279.

This sequence belongs to the metallo-dependent hydrolases superfamily. MTA/SAH deaminase family. Zn(2+) is required as a cofactor.

It catalyses the reaction S-adenosyl-L-homocysteine + H2O + H(+) = S-inosyl-L-homocysteine + NH4(+). It carries out the reaction S-methyl-5'-thioadenosine + H2O + H(+) = S-methyl-5'-thioinosine + NH4(+). Catalyzes the deamination of 5-methylthioadenosine and S-adenosyl-L-homocysteine into 5-methylthioinosine and S-inosyl-L-homocysteine, respectively. Is also able to deaminate adenosine. Adenosine-5-monophosphate (AMP) and S-adenosyl-L-methionine (SAM) are not enzyme substrates. The sequence is that of 5-methylthioadenosine/S-adenosylhomocysteine deaminase (mtaD) from Thermotoga maritima (strain ATCC 43589 / DSM 3109 / JCM 10099 / NBRC 100826 / MSB8).